The following is a 634-amino-acid chain: Threonine--tRNA ligase (634 aa).

A TGS domain is found at 1-61; sequence MISLKFPNNE…SESGEFRLYT (61 aa). Residues 242-532 are catalytic; sequence DHRKIGQELD…LIEHYAGAFP (291 aa). 3 residues coordinate Zn(2+): Cys-333, His-384, and His-509.

This sequence belongs to the class-II aminoacyl-tRNA synthetase family. Homodimer. Zn(2+) is required as a cofactor.

It is found in the cytoplasm. It carries out the reaction tRNA(Thr) + L-threonine + ATP = L-threonyl-tRNA(Thr) + AMP + diphosphate + H(+). Functionally, catalyzes the attachment of threonine to tRNA(Thr) in a two-step reaction: L-threonine is first activated by ATP to form Thr-AMP and then transferred to the acceptor end of tRNA(Thr). Also edits incorrectly charged L-seryl-tRNA(Thr). This Carboxydothermus hydrogenoformans (strain ATCC BAA-161 / DSM 6008 / Z-2901) protein is Threonine--tRNA ligase.